Here is a 123-residue protein sequence, read N- to C-terminus: Putative iron-sulfur cluster insertion protein ErpA (123 aa).

3 residues coordinate iron-sulfur cluster: Cys51, Cys115, and Cys117.

It belongs to the HesB/IscA family. In terms of assembly, homodimer. It depends on iron-sulfur cluster as a cofactor.

Functionally, required for insertion of 4Fe-4S clusters. This chain is Putative iron-sulfur cluster insertion protein ErpA, found in Bordetella avium (strain 197N).